Reading from the N-terminus, the 290-residue chain is 4-diphosphocytidyl-2-C-methyl-D-erythritol kinase (290 aa).

The active site involves lysine 10. 95 to 105 (PVAAGLAGGSS) lines the ATP pocket. The active site involves aspartate 137.

This sequence belongs to the GHMP kinase family. IspE subfamily.

The enzyme catalyses 4-CDP-2-C-methyl-D-erythritol + ATP = 4-CDP-2-C-methyl-D-erythritol 2-phosphate + ADP + H(+). It participates in isoprenoid biosynthesis; isopentenyl diphosphate biosynthesis via DXP pathway; isopentenyl diphosphate from 1-deoxy-D-xylulose 5-phosphate: step 3/6. In terms of biological role, catalyzes the phosphorylation of the position 2 hydroxy group of 4-diphosphocytidyl-2C-methyl-D-erythritol. This chain is 4-diphosphocytidyl-2-C-methyl-D-erythritol kinase, found in Geobacillus kaustophilus (strain HTA426).